A 529-amino-acid polypeptide reads, in one-letter code: Cytochrome P450 monooxygenase patI (529 aa).

At 1–8 (MDFTQVPP) the chain is on the cytoplasmic side. A helical membrane pass occupies residues 9-25 (SYILGVLLSSTSILFCL). At 26–529 (KYLLRSGYRP…EAQGVFSRFD (504 aa)) the chain is on the lumenal side. 2 N-linked (GlcNAc...) asparagine glycosylation sites follow: asparagine 81 and asparagine 383. Heme is bound at residue cysteine 449.

Belongs to the cytochrome P450 family. Requires heme as cofactor.

Its subcellular location is the endoplasmic reticulum membrane. It catalyses the reaction 3-hydroxybenzyl alcohol + reduced [NADPH--hemoprotein reductase] + O2 = gentisyl alcohol + oxidized [NADPH--hemoprotein reductase] + H2O + H(+). The protein operates within mycotoxin biosynthesis; patulin biosynthesis. Its function is as follows. Cytochrome P450 monooxygenase; part of the gene cluster that mediates the biosynthesis of patulin, an acetate-derived tetraketide mycotoxin produced by several fungal species that shows antimicrobial properties against several bacteria. PatI catalyzes the conversion of m-hydroxybenzyl alcohol into gentisyl alcohol. The pathway begins with the synthesis of 6-methylsalicylic acid by the polyketide synthase (PKS) patK via condensation of acetate and malonate units. The 6-methylsalicylic acid decarboxylase patG then catalyzes the decarboxylation of 6-methylsalicylic acid to yield m-cresol (also known as 3-methylphenol). These first reactions occur in the cytosol. The intermediate m-cresol is then transported into the endoplasmic reticulum where the cytochrome P450 monooxygenase patH converts it to m-hydroxybenzyl alcohol, which is further converted to gentisyl alcohol by the cytochrome P450 monooxygenase patI. The oxidoreductases patJ and patO further convert gentisyl alcohol to isoepoxydon in the vacuole. PatN catalyzes then the transformation of isoepoxydon into phyllostine. The cluster protein patF is responsible for the conversion from phyllostine to neopatulin whereas the alcohol dehydrogenase patD converts neopatulin to E-ascladiol. The steps between isoepoxydon and E-ascladiol occur in the cytosol, and E-ascladiol is probably secreted to the extracellular space by one of the cluster-specific transporters patC or patM. Finally, the secreted patulin synthase patE catalyzes the conversion of E-ascladiol to patulin. This is Cytochrome P450 monooxygenase patI from Aspergillus clavatus (strain ATCC 1007 / CBS 513.65 / DSM 816 / NCTC 3887 / NRRL 1 / QM 1276 / 107).